Reading from the N-terminus, the 60-residue chain is Cytochrome c oxidase assembly protein COX14 homolog (60 aa).

The helical transmembrane segment at 10–32 threads the bilayer; sequence VGYRLFSGSMMLLTVYGGYLCVV.

It is found in the mitochondrion membrane. Plays a role in the assembly or stability of the cytochrome c oxidase complex (COX). This Danio rerio (Zebrafish) protein is Cytochrome c oxidase assembly protein COX14 homolog.